A 502-amino-acid polypeptide reads, in one-letter code: Glycerol kinase (502 aa).

An ADP-binding site is contributed by Thr14. ATP is bound by residues Thr14, Thr15, and Ser16. Thr14 contacts sn-glycerol 3-phosphate. Residue Arg18 coordinates ADP. The sn-glycerol 3-phosphate site is built by Arg84, Glu85, Tyr136, and Asp246. Positions 84, 85, 136, 246, and 247 each coordinate glycerol. Positions 268 and 311 each coordinate ADP. 4 residues coordinate ATP: Thr268, Gly311, Gln315, and Gly412. ADP contacts are provided by Gly412 and Asn416.

The protein belongs to the FGGY kinase family. Homotetramer and homodimer (in equilibrium). Heterodimer with EIIA-Glc. Binds 1 zinc ion per glycerol kinase EIIA-Glc dimer. The zinc ion is important for dimerization.

It catalyses the reaction glycerol + ATP = sn-glycerol 3-phosphate + ADP + H(+). Its pathway is polyol metabolism; glycerol degradation via glycerol kinase pathway; sn-glycerol 3-phosphate from glycerol: step 1/1. Activity of this regulatory enzyme is affected by several metabolites. Allosterically and non-competitively inhibited by fructose 1,6-bisphosphate (FBP) and unphosphorylated phosphocarrier protein EIIA-Glc (III-Glc), an integral component of the bacterial phosphotransferase (PTS) system. Functionally, key enzyme in the regulation of glycerol uptake and metabolism. Catalyzes the phosphorylation of glycerol to yield sn-glycerol 3-phosphate. The protein is Glycerol kinase of Shigella flexneri.